A 159-amino-acid polypeptide reads, in one-letter code: Ribosomal RNA large subunit methyltransferase H (159 aa).

Residues Leu-76, Gly-108, and 127–132 (FGKLTL) contribute to the S-adenosyl-L-methionine site.

Belongs to the RNA methyltransferase RlmH family. In terms of assembly, homodimer.

It is found in the cytoplasm. It carries out the reaction pseudouridine(1915) in 23S rRNA + S-adenosyl-L-methionine = N(3)-methylpseudouridine(1915) in 23S rRNA + S-adenosyl-L-homocysteine + H(+). Functionally, specifically methylates the pseudouridine at position 1915 (m3Psi1915) in 23S rRNA. This is Ribosomal RNA large subunit methyltransferase H from Latilactobacillus sakei subsp. sakei (strain 23K) (Lactobacillus sakei subsp. sakei).